Consider the following 218-residue polypeptide: 3-oxo-tetronate 4-phosphate decarboxylase (218 aa).

E86 serves as the catalytic Proton acceptor. 3 residues coordinate Zn(2+): E86, H105, and H107. Catalysis depends on Y132, which acts as the Proton donor. Zn(2+) is bound at residue H172.

The protein belongs to the aldolase class II family. AraD/FucA subfamily. Requires Zn(2+) as cofactor.

It carries out the reaction 3-dehydro-4-O-phospho-D-erythronate + H(+) = dihydroxyacetone phosphate + CO2. It catalyses the reaction 3-dehydro-4-O-phospho-L-erythronate + H(+) = dihydroxyacetone phosphate + CO2. In terms of biological role, catalyzes the decarboxylation of 3-oxo-tetronate 4-phosphate to dihydroxyacetone phosphate (DHAP) and CO(2). This is 3-oxo-tetronate 4-phosphate decarboxylase from Pectobacterium atrosepticum (strain SCRI 1043 / ATCC BAA-672) (Erwinia carotovora subsp. atroseptica).